Reading from the N-terminus, the 560-residue chain is Nitrite reductase (560 aa).

A signal peptide spans 1–26 (MSNVGKPILAGLIAGLSLLGLAVAQA). The N-terminal tail stretch occupies residues 27 to 29 (AAP). Residues 30–126 (EMTAEEKEAS…ARYIQHTPDI (97 aa)) enclose the Cytochrome c domain. 3 residues coordinate heme c: Cys-47, Cys-50, and His-51. Residues 61–80 (KNLEPHWSKTEADGKKTEGG) are disordered. Basic and acidic residues predominate over residues 63 to 78 (LEPHWSKTEADGKKTE). 2 residues coordinate heme c: Thr-97 and Met-101. The segment at 127–560 (PPEFSLQDMK…NVFNTMNDVY (434 aa)) is D1-heme domain. Heme d1-binding residues include His-193, Arg-236, Ser-237, Tyr-256, Arg-382, and Gln-500.

As to quaternary structure, homodimer in solution. Requires heme c as cofactor. The cofactor is heme.

The protein resides in the periplasm. The enzyme catalyses nitric oxide + Fe(III)-[cytochrome c] + H2O = Fe(II)-[cytochrome c] + nitrite + 2 H(+). The catalysed reaction is A + NH4(+) + H2O = hydroxylamine + AH2 + H(+). This is Nitrite reductase (nirS) from Stutzerimonas stutzeri (Pseudomonas stutzeri).